Reading from the N-terminus, the 116-residue chain is NADH-ubiquinone oxidoreductase chain 3 (116 aa).

Transmembrane regions (helical) follow at residues 4 to 24 (LIIT…IAFW), 56 to 76 (FFLV…LLPL), and 88 to 108 (TLIL…YEWI).

Belongs to the complex I subunit 3 family. In terms of assembly, core subunit of respiratory chain NADH dehydrogenase (Complex I) which is composed of 45 different subunits. Interacts with TMEM186. Interacts with TMEM242.

It is found in the mitochondrion inner membrane. The enzyme catalyses a ubiquinone + NADH + 5 H(+)(in) = a ubiquinol + NAD(+) + 4 H(+)(out). Core subunit of the mitochondrial membrane respiratory chain NADH dehydrogenase (Complex I) which catalyzes electron transfer from NADH through the respiratory chain, using ubiquinone as an electron acceptor. Essential for the catalytic activity of complex I. The sequence is that of NADH-ubiquinone oxidoreductase chain 3 from Didelphis virginiana (North American opossum).